The sequence spans 146 residues: Snaclec 1 (146 aa).

An N-terminal signal peptide occupies residues 1–23 (MGRFIFMSFGLLVVFLSLSGTGA). Cystine bridges form between Cys25–Cys36, Cys53–Cys142, and Cys119–Cys134. Residues 32 to 143 (YEGHCYRVFQ…CSRTYSFVCK (112 aa)) enclose the C-type lectin domain.

The protein belongs to the snaclec family. As to quaternary structure, heterodimer; disulfide-linked. As to expression, expressed by the venom gland.

It localises to the secreted. Functionally, interferes with one step of hemostasis (modulation of platelet aggregation, or coagulation cascade, for example). The chain is Snaclec 1 from Sistrurus catenatus edwardsii (Desert massasauga).